We begin with the raw amino-acid sequence, 272 residues long: Shikimate dehydrogenase (NADP(+)) (272 aa).

Residues 14 to 16 (SKS) and threonine 61 each bind shikimate. Lysine 65 serves as the catalytic Proton acceptor. Glutamate 77 is an NADP(+) binding site. Residues asparagine 86 and aspartate 102 each contribute to the shikimate site. NADP(+) is bound by residues 126-130 (GAGGA), 149-154 (NRTASR), and methionine 213. Residue tyrosine 215 coordinates shikimate. NADP(+) is bound at residue glycine 237.

This sequence belongs to the shikimate dehydrogenase family. In terms of assembly, homodimer.

The enzyme catalyses shikimate + NADP(+) = 3-dehydroshikimate + NADPH + H(+). It functions in the pathway metabolic intermediate biosynthesis; chorismate biosynthesis; chorismate from D-erythrose 4-phosphate and phosphoenolpyruvate: step 4/7. In terms of biological role, involved in the biosynthesis of the chorismate, which leads to the biosynthesis of aromatic amino acids. Catalyzes the reversible NADPH linked reduction of 3-dehydroshikimate (DHSA) to yield shikimate (SA). This Salmonella paratyphi A (strain ATCC 9150 / SARB42) protein is Shikimate dehydrogenase (NADP(+)).